We begin with the raw amino-acid sequence, 550 residues long: MITQKISEELNKALAKMGIHDTQETKILVDKTKNIKFGDFYTNIAMILSKKNNKSSLEIAKEIANNFEQDLFLEVNLQPPGFLNFKLKAKDHENLLKQIYYEKDRFGQFSKKNITYNIEYVSANPTGYLHIAHAANAIYGDILANLLKIYGYDVETEYWINDAGNQIDKLAMSVLVRYLQLQNINIQLPADAYHGQEIHLVAQTLYQTYKNQFINVRLNEKYEIDDDIANQEIKNFAVKYLLNEIKNDLASINTFIDTYTSENWIRNSGRILEVLSKIKPYTYTLDGALWLKTTTFGDDKDRVLIKSDGSYTYFTPDIAYHDYKFNKTNTTKLIDVWGTDHLGYIARLKAAMNALGYDPNNLEIVCAQVMKLVKNNQEFKLSKRSGQSLTIKDLVEIIGKDALRWFLGSSSMNSHVIIDVDIALSKNNNNPLYYVQYAHARANQVLNKQVYELDFKTDLLTETRERELLNQLHFYKQTIANAANNREPHRISNYLYDLAQIFHNYYANVKINNDNNKVLSAQRYTLVWCVKQVLANGLAIMKITPYDQMY.

Residues 123 to 133 carry the 'HIGH' region motif; it reads ANPTGYLHIAH.

Belongs to the class-I aminoacyl-tRNA synthetase family. Monomer.

The protein resides in the cytoplasm. The enzyme catalyses tRNA(Arg) + L-arginine + ATP = L-arginyl-tRNA(Arg) + AMP + diphosphate. This Ureaplasma parvum serovar 3 (strain ATCC 27815 / 27 / NCTC 11736) protein is Arginine--tRNA ligase.